We begin with the raw amino-acid sequence, 29 residues long: Snaclec multactivase regulatory subunit (29 aa).

The 29-residue stretch at 1–29 (DCLPGWSVYEGRCYKVFNQKTWKAAEKFC) folds into the C-type lectin domain. An intrachain disulfide couples Cys-2 to Cys-13.

It belongs to the snaclec family. Heterodimer of a metalloproteinase subunit and a regulatory subunit comprising two homologous polypeptides disulfide-linked. As to expression, expressed by the venom gland.

It localises to the secreted. In terms of biological role, multactivase, a carinactivase-like calcium-dependent prothrombin activator, activates prothrombin via recognition of the calcium ion bound conformation of its gamma-carboxyglutamic acid (GLA) domain, and the subsequent conversion of prothrombin to active thrombin is catalyzed by the catalytic subunit. The chain is Snaclec multactivase regulatory subunit from Echis multisquamatus (Central Asian sand viper).